A 172-amino-acid polypeptide reads, in one-letter code: Ribosome maturation factor RimM (172 aa).

A PRC barrel domain is found at 95–168; sequence QEGEFYYHQI…CVDVELMEGL (74 aa).

It belongs to the RimM family. In terms of assembly, binds ribosomal protein uS19.

It localises to the cytoplasm. Functionally, an accessory protein needed during the final step in the assembly of 30S ribosomal subunit, possibly for assembly of the head region. Essential for efficient processing of 16S rRNA. May be needed both before and after RbfA during the maturation of 16S rRNA. It has affinity for free ribosomal 30S subunits but not for 70S ribosomes. This is Ribosome maturation factor RimM from Streptococcus pyogenes serotype M49 (strain NZ131).